Reading from the N-terminus, the 122-residue chain is Small ribosomal subunit protein uS12c (122 aa).

This sequence belongs to the universal ribosomal protein uS12 family. As to quaternary structure, part of the 30S ribosomal subunit.

The protein resides in the plastid. It is found in the chloroplast. Functionally, with S4 and S5 plays an important role in translational accuracy. Located at the interface of the 30S and 50S subunits. The sequence is that of Small ribosomal subunit protein uS12c (rps12) from Cyanidioschyzon merolae (strain NIES-3377 / 10D) (Unicellular red alga).